We begin with the raw amino-acid sequence, 475 residues long: Argininosuccinate lyase (475 aa).

Belongs to the lyase 1 family. Argininosuccinate lyase subfamily.

The protein resides in the cytoplasm. The catalysed reaction is 2-(N(omega)-L-arginino)succinate = fumarate + L-arginine. It functions in the pathway amino-acid biosynthesis; L-arginine biosynthesis; L-arginine from L-ornithine and carbamoyl phosphate: step 3/3. This is Argininosuccinate lyase from Streptomyces griseus subsp. griseus (strain JCM 4626 / CBS 651.72 / NBRC 13350 / KCC S-0626 / ISP 5235).